Consider the following 178-residue polypeptide: MDKKQYAIIEKYALPFVQTVFEKGQQEDVFEKLSQIKAVFAETGLADFLSHIGISDHEKEKSLRLFQNSGSQLLDNLIEIVILNHREDLFYEIVLESQHQLEKISNEFEVTLRSVQPLTASQKEKIRPIIEQKMGLKVRSLKEELDSSLIGGFVISANNKTIDASIKRQLQVIKEKLK.

The protein belongs to the ATPase delta chain family. As to quaternary structure, F-type ATPases have 2 components, F(1) - the catalytic core - and F(0) - the membrane proton channel. F(1) has five subunits: alpha(3), beta(3), gamma(1), delta(1), epsilon(1). F(0) has three main subunits: a(1), b(2) and c(10-14). The alpha and beta chains form an alternating ring which encloses part of the gamma chain. F(1) is attached to F(0) by a central stalk formed by the gamma and epsilon chains, while a peripheral stalk is formed by the delta and b chains.

The protein localises to the cell membrane. Its function is as follows. F(1)F(0) ATP synthase produces ATP from ADP in the presence of a proton or sodium gradient. F-type ATPases consist of two structural domains, F(1) containing the extramembraneous catalytic core and F(0) containing the membrane proton channel, linked together by a central stalk and a peripheral stalk. During catalysis, ATP synthesis in the catalytic domain of F(1) is coupled via a rotary mechanism of the central stalk subunits to proton translocation. This protein is part of the stalk that links CF(0) to CF(1). It either transmits conformational changes from CF(0) to CF(1) or is implicated in proton conduction. This chain is ATP synthase subunit delta, found in Streptococcus sanguinis (strain SK36).